The sequence spans 313 residues: Malate dehydrogenase (313 aa).

Residues 11 to 16 and aspartate 35 contribute to the NAD(+) site; that span reads GAGNIG. Positions 86 and 92 each coordinate substrate. NAD(+)-binding positions include asparagine 99 and 122 to 124; that span reads ISN. Substrate contacts are provided by asparagine 124 and arginine 155. Histidine 179 functions as the Proton acceptor in the catalytic mechanism.

It belongs to the LDH/MDH superfamily. MDH type 3 family.

It catalyses the reaction (S)-malate + NAD(+) = oxaloacetate + NADH + H(+). Catalyzes the reversible oxidation of malate to oxaloacetate. This is Malate dehydrogenase from Sorangium cellulosum (strain So ce56) (Polyangium cellulosum (strain So ce56)).